Here is a 90-residue protein sequence, read N- to C-terminus: Probable Fe(2+)-trafficking protein (90 aa).

This sequence belongs to the Fe(2+)-trafficking protein family.

Functionally, could be a mediator in iron transactions between iron acquisition and iron-requiring processes, such as synthesis and/or repair of Fe-S clusters in biosynthetic enzymes. In Delftia acidovorans (strain DSM 14801 / SPH-1), this protein is Probable Fe(2+)-trafficking protein.